Reading from the N-terminus, the 569-residue chain is F-box-like/WD repeat-containing protein TBL1X (569 aa).

A LisH domain is found at 55 to 87; that stretch reads TSDEVNFLVYRYLQESGFSHSAFTFGIESHISQ. The 46-residue stretch at 92–137 folds into the F-box-like domain; sequence GTLVPPAALISILQKGLQYVEAEISINEDGTVFDGRPIESLSLIDA. N6-acetyllysine is present on K153. The segment at 170 to 195 is disordered; the sequence is TSASVSQQNPSKNREATVNGEENRAH. Phosphoserine is present on S175. 8 WD repeats span residues 222–261, 278–317, 319–358, 361–401, 402–441, 444–492, 495–534, and 536–568; these read GHES…NGGS, PSNK…ASTL, QHKG…AKQQ, FHSA…KTFQ, GHTN…CIHD, AHNK…CTHT, KHQE…LVHS, and RGTG…LDLR. A Glycyl lysine isopeptide (Lys-Gly) (interchain with G-Cter in SUMO2) cross-link involves residue K332.

The protein belongs to the WD repeat EBI family. Homotetramer; dimer of dimers. Component of the N-Cor repressor complex, at least composed of NCOR1, NCOR2, HDAC3, TBL1X, TBL1R, CORO2A and GPS2. Interacts with GPS2 (when sumoylated); leading to protect GPS2 against degradation by the proteasome. Component of a E3 ubiquitin ligase complex containing UBE2D1, SIAH1, CACYBP/SIP, SKP1, APC and TBL1X. Probably part of other corepressor complexes, that do not contain NCOR1 and NCOR2. Interacts with histones H2B, H3a and H4. Interacts with MECP2; recruits TBL1X to the heterochromatin foci. Interacts with USP44.

It is found in the nucleus. In terms of biological role, F-box-like protein involved in the recruitment of the ubiquitin/19S proteasome complex to nuclear receptor-regulated transcription units. Plays an essential role in transcription activation mediated by nuclear receptors. Probably acts as integral component of corepressor complexes that mediates the recruitment of the 19S proteasome complex, leading to the subsequent proteasomal degradation of transcription repressor complexes, thereby allowing cofactor exchange. The polypeptide is F-box-like/WD repeat-containing protein TBL1X (TBL1X) (Macaca fascicularis (Crab-eating macaque)).